The sequence spans 457 residues: Reticulophagy regulator 3 (457 aa).

Residues 1–24 form a disordered region; sequence MAQRVGEEEQGASGLRRRRSGARC. 3 helical membrane-spanning segments follow: residues 80 to 100, 165 to 185, and 186 to 206; these read FFAL…MIII, PGKF…LGGY, and IPGV…PLAI. Residues 291-305 are compositionally biased toward polar residues; sequence ENGTFNLSRGQTPLT. Disordered stretches follow at residues 291–351 and 410–457; these read ENGT…IPST and AYAE…HSHQ. The span at 310 to 326 shows a compositional bias: basic and acidic residues; the sequence is DLDRHSDPEESFARDLP. Acidic residues predominate over residues 428–441; that stretch reads LDTDAEADDFELLD. The short motif at 435-440 is the LIR motif element; sequence DDFELL. Residues 443–457 are compositionally biased toward polar residues; it reads SELSQMDPSSSHSHQ.

It belongs to the RETREG family. In terms of assembly, interacts with ATG8 family modifier proteins.

It is found in the endoplasmic reticulum membrane. Its function is as follows. Endoplasmic reticulum (ER)-anchored autophagy regulator which exists in an inactive state under basal conditions but is activated following cellular stress. When activated, induces ER fragmentation and mediates ER delivery into lysosomes through sequestration into autophagosomes via interaction with ATG8 family proteins. Promotes ER membrane curvature and ER tubulation required for subsequent ER fragmentation and engulfment into autophagosomes. The polypeptide is Reticulophagy regulator 3 (retreg3) (Xenopus tropicalis (Western clawed frog)).